A 528-amino-acid chain; its full sequence is DnaJ homolog 1, mitochondrial (528 aa).

A mitochondrion-targeting transit peptide spans 1 to 66 (MFSKYLQSRV…REFSRCAALK (66 aa)). In terms of domain architecture, J spans 86 to 150 (DPYKTLGVSK…KKKKAFDTYG (65 aa)). A CR-type zinc finger spans residues 227–308 (GAKKDLSYSV…CMGSGTVRER (82 aa)). CXXCXGXG motif repeat units lie at residues 240–247 (CSSCHGSG), 257–264 (CFACKGTG), 280–287 (CDSCGGTG), and 296–303 (CRSCMGSG). Residues 455-528 (NDSTARRTQS…QNPKKDESSS (74 aa)) form a disordered region. Positions 462 to 488 (TQSSPSGTNSSTSTSSTSSKHSTGIST) are enriched in low complexity. Residues 513 to 528 (LHPDEDQNPKKDESSS) are compositionally biased toward basic and acidic residues.

It is found in the mitochondrion. This is DnaJ homolog 1, mitochondrial (mdj1) from Schizosaccharomyces pombe (strain 972 / ATCC 24843) (Fission yeast).